The chain runs to 716 residues: Leucine-rich repeat neuronal protein 1 (716 aa).

Residues 1–25 (MARLSTGKAACQVVLGLLITSLTES) form the signal peptide. Residues 26 to 72 (SILTSECPQLCVCEIRPWFTPQSTYREATTVDCNDLRLTRIPGNLSS) enclose the LRRNT domain. Residues 26–631 (SILTSECPQL…DISDHETSTA (606 aa)) lie on the Extracellular side of the membrane. N-linked (GlcNAc...) asparagine glycosylation is present at N69. LRR repeat units follow at residues 73-95 (DTQVLLLQSNNIAKTVDELQQLF), 96-117 (NLTELDFSQNNFTNIKEVGLAN), 120-141 (QLTTLHLEENQISEMTDYCLQD), 144-165 (NLQELYINHNQISTISANAFSG), 168-189 (NLLRLHLNSNKLKVIDSRWFDS), 192-213 (NLEILMIGENPVIGILDMNFRP), 216-237 (NLRSLVLAGMYLTDVPGNALVG), 240-261 (SLESLSFYDNKLIKVPQLALQK), and 264-285 (NLKFLDLNKNPIHKIQEGDFKN). 2 N-linked (GlcNAc...) asparagine glycosylation sites follow: N96 and N117. One can recognise an LRRCT domain in the interval 371–424 (NPLRCDCVIHWINSNKTNIRFMEPLSMFCAMPPEYRGQQVKEVLIQDSSEQCLP). N385 carries an N-linked (GlcNAc...) asparagine glycan. The 92-residue stretch at 424-515 (PMISHDTFPN…GADTRVATIK (92 aa)) folds into the Ig-like C2-type domain. The cysteines at positions 447 and 499 are disulfide-linked. N517 carries N-linked (GlcNAc...) asparagine glycosylation. Residues 525-619 (QVLKIYVKQT…VNVTTKTAAF (95 aa)) form the Fibronectin type-III domain. Residues 632 to 652 (LAAVMGSMFAVISLASIAIYI) traverse the membrane as a helical segment. The Cytoplasmic portion of the chain corresponds to 653–716 (AKRFKRKNYH…VDTSRSYYMW (64 aa)). Residues 692–716 (SDKDKDGSADTKPTQVDTSRSYYMW) form a disordered region. Residues 702-716 (TKPTQVDTSRSYYMW) are compositionally biased toward polar residues.

In terms of tissue distribution, expressed in brain.

Its subcellular location is the membrane. The polypeptide is Leucine-rich repeat neuronal protein 1 (Lrrn1) (Mus musculus (Mouse)).